The primary structure comprises 240 residues: UDP-2,3-diacylglucosamine hydrolase (240 aa).

Mn(2+) contacts are provided by Asp8, His10, Asp41, Asn79, and His114. Substrate is bound at residue 79–80 (NR). Positions 122, 160, 164, 167, and 195 each coordinate substrate. Mn(2+) contacts are provided by His195 and His197.

It belongs to the LpxH family. Requires Mn(2+) as cofactor.

The protein resides in the cell inner membrane. The catalysed reaction is UDP-2-N,3-O-bis[(3R)-3-hydroxytetradecanoyl]-alpha-D-glucosamine + H2O = 2-N,3-O-bis[(3R)-3-hydroxytetradecanoyl]-alpha-D-glucosaminyl 1-phosphate + UMP + 2 H(+). It participates in glycolipid biosynthesis; lipid IV(A) biosynthesis; lipid IV(A) from (3R)-3-hydroxytetradecanoyl-[acyl-carrier-protein] and UDP-N-acetyl-alpha-D-glucosamine: step 4/6. Its function is as follows. Hydrolyzes the pyrophosphate bond of UDP-2,3-diacylglucosamine to yield 2,3-diacylglucosamine 1-phosphate (lipid X) and UMP by catalyzing the attack of water at the alpha-P atom. Involved in the biosynthesis of lipid A, a phosphorylated glycolipid that anchors the lipopolysaccharide to the outer membrane of the cell. This is UDP-2,3-diacylglucosamine hydrolase from Enterobacter sp. (strain 638).